The sequence spans 646 residues: DEAD-box ATP-dependent RNA helicase 52 (646 aa).

2 disordered regions span residues methionine 1–glycine 64 and glycine 76–asparagine 117. Position 2 is an N-acetylserine (serine 2). 2 stretches are compositionally biased toward gly residues: residues aspartate 54–glycine 64 and glycine 76–glycine 87. The Q motif motif lies at asparagine 146–arginine 174. The Helicase ATP-binding domain occupies isoleucine 177–leucine 361. Alanine 190–threonine 197 lines the ATP pocket. Residues aspartate 305 to aspartate 308 carry the DEAD box motif. The 152-residue stretch at histidine 388–alanine 539 folds into the Helicase C-terminal domain.

It belongs to the DEAD box helicase family. DDX3/DED1 subfamily.

The catalysed reaction is ATP + H2O = ADP + phosphate + H(+). The protein is DEAD-box ATP-dependent RNA helicase 52 (RH52) of Arabidopsis thaliana (Mouse-ear cress).